A 117-amino-acid chain; its full sequence is Large ribosomal subunit protein eL34 (117 aa).

Position 12 is a phosphoserine (serine 12). Lysine 36 and lysine 43 each carry N6-acetyllysine. Lysine 108 participates in a covalent cross-link: Glycyl lysine isopeptide (Lys-Gly) (interchain with G-Cter in SUMO2).

This sequence belongs to the eukaryotic ribosomal protein eL34 family. Component of the large ribosomal subunit.

It is found in the cytoplasm. The protein resides in the cytosol. Its subcellular location is the endoplasmic reticulum. In terms of biological role, component of the large ribosomal subunit. The ribosome is a large ribonucleoprotein complex responsible for the synthesis of proteins in the cell. The polypeptide is Large ribosomal subunit protein eL34 (Rpl34) (Rattus norvegicus (Rat)).